A 148-amino-acid polypeptide reads, in one-letter code: Protein SOB FIVE-LIKE 1 (148 aa).

The segment covering 1–10 (MESPRNHGGS) has biased composition (basic and acidic residues). Disordered regions lie at residues 1–20 (MESP…SCES) and 33–148 (NDQS…SKTK). Residues 20–25 (SGWTMY) carry the SOFL-A motif. Residues 54-76 (DGYENDDGDTSDDGGDEESDDSM) show a composition bias toward acidic residues. The short motif at 75 to 84 (SMASDASSGP) is the SOFL-B element. Basic residues predominate over residues 91 to 101 (HINKHAARKNG). Residues 111-128 (QHTEKTISNEGEKSDLKA) show a composition bias toward basic and acidic residues.

It belongs to the SOFL plant protein family. In terms of tissue distribution, predominantly expressed in the vascular tissues of seedlings, developing leaves, flowers and siliques, but barely detectable in roots and stems.

The protein resides in the cytoplasm. Its subcellular location is the nucleus. Involved in cytokinin-mediated development. Together with SOFL2, triggers the endogenous content of specific bioactive cytokinins derived from the biosynthetic intermediates trans-zeatin riboside monophosphate (tZRMP) and N(6)-(Delta(2)-isopentenyl)adenosine monophosphate (iPRMP) such as N-glucosides trans-zeatin 7-glucoside (tZ7G), cis-zeatin 7-glucoside (cZ7G) and N(6)-(Delta(2)-isopentenyl)adenine 7-glucoside (iP7G). The polypeptide is Protein SOB FIVE-LIKE 1 (Arabidopsis thaliana (Mouse-ear cress)).